Reading from the N-terminus, the 450-residue chain is Phosphoglucosamine mutase (450 aa).

The active-site Phosphoserine intermediate is the S102. Residues S102, D243, D245, and D247 each coordinate Mg(2+). S102 bears the Phosphoserine mark.

This sequence belongs to the phosphohexose mutase family. Requires Mg(2+) as cofactor. In terms of processing, activated by phosphorylation.

The enzyme catalyses alpha-D-glucosamine 1-phosphate = D-glucosamine 6-phosphate. Its function is as follows. Catalyzes the conversion of glucosamine-6-phosphate to glucosamine-1-phosphate. This is Phosphoglucosamine mutase from Rhizobium etli (strain CIAT 652).